We begin with the raw amino-acid sequence, 96 residues long: Molybdopterin synthase sulfur carrier subunit (96 aa).

Gly96 carries the post-translational modification 1-thioglycine; alternate. Glycyl adenylate; alternate is present on Gly96.

This sequence belongs to the MoaD family. MOCS2A subfamily. In terms of assembly, heterotetramer; composed of 2 small (MOCS2A) and 2 large (MOCS2B) subunits. Post-translationally, C-terminal thiocarboxylation occurs in 2 steps, it is first acyl-adenylated (-COAMP) via the hesA/moeB/thiF part of MOCS3, then thiocarboxylated (-COSH) via the rhodanese domain of MOCS3.

It is found in the cytoplasm. It participates in cofactor biosynthesis; molybdopterin biosynthesis. In terms of biological role, acts as a sulfur carrier required for molybdopterin biosynthesis. Component of the molybdopterin synthase complex that catalyzes the conversion of precursor Z into molybdopterin by mediating the incorporation of 2 sulfur atoms into precursor Z to generate a dithiolene group. In the complex, serves as sulfur donor by being thiocarboxylated (-COSH) at its C-terminus by MOCS3. After interaction with MOCS2B, the sulfur is then transferred to precursor Z to form molybdopterin. In Arabidopsis thaliana (Mouse-ear cress), this protein is Molybdopterin synthase sulfur carrier subunit.